Here is a 194-residue protein sequence, read N- to C-terminus: HTH-type transcriptional regulator BetI (194 aa).

The HTH tetR-type domain occupies 8–68 (EIRRAQLIDA…ATMRHVLRDL (61 aa)). The H-T-H motif DNA-binding region spans 31–50 (TLASVAQRANISTGIVSHYF).

Its pathway is amine and polyamine biosynthesis; betaine biosynthesis via choline pathway [regulation]. In terms of biological role, repressor involved in the biosynthesis of the osmoprotectant glycine betaine. It represses transcription of the choline transporter BetT and the genes of BetAB involved in the synthesis of glycine betaine. This is HTH-type transcriptional regulator BetI from Burkholderia cenocepacia (strain HI2424).